We begin with the raw amino-acid sequence, 330 residues long: Endo-1,4-beta-xylanase (330 aa).

A GH10 domain is found at 2–330 (CSSIPSLREV…KPAFWRVVNI (329 aa)). Residue Glu133 is the Proton donor of the active site. Glu240 functions as the Nucleophile in the catalytic mechanism.

This sequence belongs to the glycosyl hydrolase 10 (cellulase F) family. Cytoplasmic xylanase subfamily.

The protein resides in the cytoplasm. The catalysed reaction is Endohydrolysis of (1-&gt;4)-beta-D-xylosidic linkages in xylans.. It participates in glycan degradation; xylan degradation. The sequence is that of Endo-1,4-beta-xylanase (xynA) from Geobacillus stearothermophilus (Bacillus stearothermophilus).